The sequence spans 374 residues: MSKRDYYEVLGVARTATDDELKKAYRRCAMKFHPDRNPGDAAAEASFKECKEAYEVLSDGNKRRMYDSHGHAAFEHGMGGGGPGGPDMNDIFGDIFGNIFGGGGGGPRQARRGADIGYVMELDLEEAVRGVERRIEIPTLAECGDCDGSGSEDGKVETCNVCHGRGQVRIQRGIFAMQQACHNCGGRGQIIAKPCKTCHGNGRVEEDKVLSVKVPAGVDTGDRIRLQGEGEAGPAGTPPGDLYVEVRVREHAIFQRDGDDLHCEVPIRISQAALGDTVRVATLGGEAEIRIPAETQTGKLFRLRGKGVRSVRSRSEGDLYCRVVVETPVNLTPEQRKLLEQFEATFVGEEARKHSPKSATFMDGVKGFWDRMTS.

The J domain occupies 5-70 (DYYEVLGVAR…NKRRMYDSHG (66 aa)). Residues 130–207 (GVERRIEIPT…CHGNGRVEED (78 aa)) form a CR-type zinc finger. Zn(2+) contacts are provided by Cys143, Cys146, Cys159, Cys162, Cys181, Cys184, Cys195, and Cys198. CXXCXGXG motif repeat units follow at residues 143–150 (CGDCDGSG), 159–166 (CNVCHGRG), 181–188 (CHNCGGRG), and 195–202 (CKTCHGNG).

The protein belongs to the DnaJ family. As to quaternary structure, homodimer. It depends on Zn(2+) as a cofactor.

It localises to the cytoplasm. Its function is as follows. Participates actively in the response to hyperosmotic and heat shock by preventing the aggregation of stress-denatured proteins and by disaggregating proteins, also in an autonomous, DnaK-independent fashion. Unfolded proteins bind initially to DnaJ; upon interaction with the DnaJ-bound protein, DnaK hydrolyzes its bound ATP, resulting in the formation of a stable complex. GrpE releases ADP from DnaK; ATP binding to DnaK triggers the release of the substrate protein, thus completing the reaction cycle. Several rounds of ATP-dependent interactions between DnaJ, DnaK and GrpE are required for fully efficient folding. Also involved, together with DnaK and GrpE, in the DNA replication of plasmids through activation of initiation proteins. This chain is Chaperone protein DnaJ, found in Stenotrophomonas maltophilia (strain K279a).